The following is a 492-amino-acid chain: MAETGSVHATRFEAAVKVIQSLPKNGSFQPTNEMMLKFYSFYKQATQGPCNIPRPGFWDPIGRYKWDAWSALGDMSKEEAMIAYVEEMKKILESMPMTDKVEELLQVIGPFYEIVEDKKNRGSGLTSDLSNVMNSTPNIKAVNGKAESSDSGAESEEEGLREEEEKELQQNVKDCKSPKTESLAAKDLENSVANDCYKDSFIPDMQNGIQTKSALNGLNVEEEIKKTEPSLEIANNCDHRGANEENTEEVSGTQHLTSDSDSEVYCDSMEQLGLEEPLEIITSAKGSLKRSSHFLDVDHRLQLENTDLPRHACTTAGNLQLGTAVDGAVQEKGEVKCGGEDGKASNGAPHKEKKDGEKADFYGVRRGRGHRLHPVGDGSQGGQMGNGGDGERWGSDRGPRGSLNEQIAVVLMRLQEDMQNVLQRLHMLEAVTASQARSATLQSNYQPASSVKKPSWWPFEISPGVLAFAIVWPFIAQWLVHVYLQRKRRKLN.

In terms of domain architecture, ACB spans 8-97 (HATRFEAAVK…MKKILESMPM (90 aa)). An acyl-CoA-binding positions include 19–28 (IQSLPKNGSF), 39–43 (YSFYK), Lys-65, and Tyr-84. 2 disordered regions span residues 141 to 162 (AVNG…GLRE) and 335 to 399 (VKCG…DRGP). Positions 153–162 (AESEEEGLRE) are enriched in acidic residues. Basic and acidic residues predominate over residues 335-360 (VKCGGEDGKASNGAPHKEKKDGEKAD). Residues 378-388 (GSQGGQMGNGG) are compositionally biased toward gly residues. A compositionally biased stretch (basic and acidic residues) spans 389-399 (DGERWGSDRGP). Residues 405-431 (EQIAVVLMRLQEDMQNVLQRLHMLEAV) adopt a coiled-coil conformation. Residues 464 to 484 (GVLAFAIVWPFIAQWLVHVYL) traverse the membrane as a helical segment.

This sequence belongs to the ATG37 family.

The protein resides in the peroxisome membrane. Acyl-CoA binding protein which acts as the peroxisome receptor for pexophagy but is dispensable for aggrephagy and nonselective autophagy. Binds medium- and long-chain acyl-CoA esters. This is Acyl-CoA-binding domain-containing protein 5 (ACBD5) from Gallus gallus (Chicken).